We begin with the raw amino-acid sequence, 123 residues long: Histone H2B (123 aa).

Residues 1 to 30 form a disordered region; it reads MPPKTSGKAAKKAGKAQKNITKTDKKKKRK. Pro2 bears the N-methylproline; partial mark. At Lys44 the chain carries N6-succinyllysine. Ser110 is a glycosylation site (O-linked (GlcNAc) serine). N6-succinyllysine is present on residues Lys114 and Lys118. A Glycyl lysine isopeptide (Lys-Gly) (interchain with G-Cter in ubiquitin) cross-link involves residue Lys118.

The protein belongs to the histone H2B family. In terms of assembly, the nucleosome is a histone octamer containing two molecules each of H2A, H2B, H3 and H4 assembled in one H3-H4 heterotetramer and two H2A-H2B heterodimers. The octamer wraps approximately 147 bp of DNA. Phosphorylated by the catalytic component of the Dbf4-dependent kinase (DDK) complex Cdc7. In terms of processing, monoubiquitination of Lys-118 by Bre1 gives a specific tag for epigenetic transcriptional activation and is also prerequisite for histone H3 'Lys-4' and 'Lys-79' methylation. Deubiquitination of Lys-118 by the SAGA complex is involved in activating transcription of a large subset of genes. Post-translationally, methylation at Pro-2 increases upon heat shock. GlcNAcylation at Ser-110 promotes monoubiquitination of Lys-118. It fluctuates in response to extracellular glucose, and associates with transcribed genes.

It localises to the nucleus. It is found in the chromosome. Functionally, core component of nucleosome. Nucleosomes wrap and compact DNA into chromatin, limiting DNA accessibility to the cellular machineries which require DNA as a template. Histones thereby play a central role in transcription regulation, DNA repair, DNA replication and chromosomal stability. DNA accessibility is regulated via a complex set of post-translational modifications of histones, also called histone code, and nucleosome remodeling. The chain is Histone H2B (His2B) from Drosophila erecta (Fruit fly).